Consider the following 201-residue polypeptide: Recombination protein RecR (201 aa).

The C4-type zinc finger occupies 57-72 (CADCRTFTEQPVCTIC). Residues 81-176 (GQICVVESPA…MASRIAHGVP (96 aa)) form the Toprim domain.

It belongs to the RecR family.

Functionally, may play a role in DNA repair. It seems to be involved in an RecBC-independent recombinational process of DNA repair. It may act with RecF and RecO. The polypeptide is Recombination protein RecR (Sodalis glossinidius (strain morsitans)).